Consider the following 213-residue polypeptide: Uridine kinase (213 aa).

ATP is bound at residue 15 to 22 (GASASGKS).

It belongs to the uridine kinase family.

The protein localises to the cytoplasm. The catalysed reaction is uridine + ATP = UMP + ADP + H(+). It carries out the reaction cytidine + ATP = CMP + ADP + H(+). Its pathway is pyrimidine metabolism; CTP biosynthesis via salvage pathway; CTP from cytidine: step 1/3. The protein operates within pyrimidine metabolism; UMP biosynthesis via salvage pathway; UMP from uridine: step 1/1. This is Uridine kinase from Enterobacter sp. (strain 638).